The following is a 200-amino-acid chain: Integrin beta-1-binding protein 1 (200 aa).

Positions 1–10 (MFRKGKKRHS) are enriched in basic residues. A disordered region spans residues 1-55 (MFRKGKKRHSSSSSQSSEISTKSKSVDSSLGGLSRSSTVASLDTDSTKSSGQSNS). The short motif at 6–7 (KK) is the Nuclear localization signal element. Low complexity predominate over residues 11–29 (SSSSQSSEISTKSKSVDSS). A compositionally biased stretch (polar residues) spans 34–55 (SRSSTVASLDTDSTKSSGQSNS). Residue Thr-38 is modified to Phosphothreonine; by CaMK2. Position 41 is a phosphoserine (Ser-41). The PID domain occupies 58-200 (DTCAEFRIKY…FDSVLTSDKS (143 aa)). An interaction with KRIT1 region spans residues 136–139 (YLII). The tract at residues 139–141 (IRM) is interaction with ITGB1.

Found in a complex, at least composed of ITGB1BP1, KRIT1 and RAP1A. Interacts (via C-terminal region) with ITGB1 (via C-terminal cytoplasmic tail); the interaction prevents talin TLN1 binding to ITGB1 and KRIT1 and ITGB1 compete for the same binding site. Interacts with KRIT1 (via N-terminal NPXY motif); the interaction induces the opening conformation of KRIT1 and KRIT1 and ITGB1 compete for the same binding site. Isoform 2 does not interact with ITGB1. Interacts with CDC42 (GTP- or GDP-bound form); the interaction is increased with the CDC42-membrane bound forms and prevents both CDC42 activation and cell spreading. Interacts (via C-terminal domain region) with NME2. Interacts with FERMT2 and RAC1. Interacts (via N-terminus and PTB domain) with ROCK1. Post-translationally, phosphorylation at Thr-38 seems to enhance integrin alpha5beta1-mediated cell adhesion. The degree of phosphorylation is regulated by integrin-dependent cell-matrix interaction. In terms of tissue distribution, expressed in the brain.

The protein resides in the nucleus. It is found in the cytoplasm. It localises to the cytoskeleton. Its subcellular location is the cell membrane. The protein localises to the cell projection. The protein resides in the lamellipodium. It is found in the ruffle. In terms of biological role, key regulator of the integrin-mediated cell-matrix interaction signaling by binding to the ITGB1 cytoplasmic tail and preventing the activation of integrin alpha-5/beta-1 (heterodimer of ITGA5 and ITGB1) by talin or FERMT1. Plays a role in cell proliferation, differentiation, spreading, adhesion and migration in the context of mineralization and bone development and angiogenesis. Stimulates cellular proliferation in a fibronectin-dependent manner. Involved in the regulation of beta-1 integrin-containing focal adhesion (FA) site dynamics by controlling its assembly rate during cell adhesion; inhibits beta-1 integrin clustering within FA by directly competing with talin TLN1, and hence stimulates osteoblast spreading and migration in a fibronectin- and/or collagen-dependent manner. Acts as a guanine nucleotide dissociation inhibitor (GDI) by regulating Rho family GTPases during integrin-mediated cell matrix adhesion; reduces the level of active GTP-bound form of both CDC42 and RAC1 GTPases upon cell adhesion to fibronectin. Stimulates the release of active CDC42 from the membranes to maintain it in an inactive cytoplasmic pool. Participates in the translocation of the Rho-associated protein kinase ROCK1 to membrane ruffles at cell leading edges of the cell membrane, leading to an increase of myoblast cell migration on laminin. Plays a role in bone mineralization at a late stage of osteoblast differentiation; modulates the dynamic formation of focal adhesions into fibrillar adhesions, which are adhesive structures responsible for fibronectin deposition and fibrillogenesis. Plays a role in blood vessel development; acts as a negative regulator of angiogenesis by attenuating endothelial cell proliferation and migration, lumen formation and sprouting angiogenesis by promoting AKT phosphorylation and inhibiting ERK1/2 phosphorylation through activation of the Notch signaling pathway. Promotes transcriptional activity of the MYC promoter. This Mus musculus (Mouse) protein is Integrin beta-1-binding protein 1 (Itgb1bp1).